A 662-amino-acid chain; its full sequence is Putative cysteine-rich receptor-like protein kinase 16 (662 aa).

The signal sequence occupies residues 1-26; it reads MIFIMKLKNLLPIFCFFLVSFSISSA. 2 consecutive Gnk2-homologous domains span residues 27–131 and 137–244; these read QKCG…NRSF and MTPF…LYQF. Topologically, residues 27 to 277 are extracellular; it reads QKCGKTGLFK…DDGGKISTRN (251 aa). Residues Asn-55, Asn-64, Asn-106, Asn-128, Asn-145, Asn-152, and Asn-206 are each glycosylated (N-linked (GlcNAc...) asparagine). Residues 278–298 form a helical membrane-spanning segment; sequence ILGITVALAFFITVLLVLGYA. The Cytoplasmic segment spans residues 299–662; sequence LSRRRKAYQE…DASITSVDLR (364 aa). The region spanning 335 to 612 is the Protein kinase domain; the sequence is FQKSNKLGHG…VFQMLTNTFL (278 aa). ATP-binding positions include 341–349 and Lys-363; that span reads LGHGGFGEV. The active-site Proton acceptor is the Asp-460.

It belongs to the protein kinase superfamily. Ser/Thr protein kinase family. CRK subfamily.

It localises to the membrane. It carries out the reaction L-seryl-[protein] + ATP = O-phospho-L-seryl-[protein] + ADP + H(+). It catalyses the reaction L-threonyl-[protein] + ATP = O-phospho-L-threonyl-[protein] + ADP + H(+). The chain is Putative cysteine-rich receptor-like protein kinase 16 (CRK16) from Arabidopsis thaliana (Mouse-ear cress).